Consider the following 305-residue polypeptide: Phosphoribosylaminoimidazole-succinocarboxamide synthase (305 aa).

It belongs to the SAICAR synthetase family.

The catalysed reaction is 5-amino-1-(5-phospho-D-ribosyl)imidazole-4-carboxylate + L-aspartate + ATP = (2S)-2-[5-amino-1-(5-phospho-beta-D-ribosyl)imidazole-4-carboxamido]succinate + ADP + phosphate + 2 H(+). It participates in purine metabolism; IMP biosynthesis via de novo pathway; 5-amino-1-(5-phospho-D-ribosyl)imidazole-4-carboxamide from 5-amino-1-(5-phospho-D-ribosyl)imidazole-4-carboxylate: step 1/2. In Polaromonas naphthalenivorans (strain CJ2), this protein is Phosphoribosylaminoimidazole-succinocarboxamide synthase.